Reading from the N-terminus, the 436-residue chain is Enolase (436 aa).

Gln167 contributes to the (2R)-2-phosphoglycerate binding site. Glu209 serves as the catalytic Proton donor. Residues Asp246, Glu291, and Asp318 each coordinate Mg(2+). 4 residues coordinate (2R)-2-phosphoglycerate: Lys343, Arg372, Ser373, and Lys394. The active-site Proton acceptor is Lys343.

It belongs to the enolase family. As to quaternary structure, component of the RNA degradosome, a multiprotein complex involved in RNA processing and mRNA degradation. It depends on Mg(2+) as a cofactor.

The protein resides in the cytoplasm. The protein localises to the secreted. It is found in the cell surface. It catalyses the reaction (2R)-2-phosphoglycerate = phosphoenolpyruvate + H2O. Its pathway is carbohydrate degradation; glycolysis; pyruvate from D-glyceraldehyde 3-phosphate: step 4/5. Functionally, catalyzes the reversible conversion of 2-phosphoglycerate (2-PG) into phosphoenolpyruvate (PEP). It is essential for the degradation of carbohydrates via glycolysis. This chain is Enolase, found in Haemophilus influenzae (strain 86-028NP).